A 421-amino-acid polypeptide reads, in one-letter code: Acylglycerol kinase, mitochondrial (421 aa).

Lysine 6 is modified (N6-acetyllysine). A hydrophobic region spans residues 15–31 (TTAGLCLLTWGGHWLYG). One can recognise a DAGKc domain in the interval 58-199 (AQVKKATVFL…LDVLQIKGEK (142 aa)). Residues 252-271 (ISYTGPRERPPIEPEETPPR) form a disordered region.

This sequence belongs to the AGK family. As to quaternary structure, component of the TIM22 complex, which core is composed of TIMM22, associated with TIMM10 (TIMM10A and/or TIMM10B), TIMM9, AGK and TIMM29. Interacts with SMIM26. The cofactor is Mg(2+). As to expression, ubiquitously expressed.

Its subcellular location is the mitochondrion inner membrane. It is found in the mitochondrion intermembrane space. It catalyses the reaction a monoacylglycerol + ATP = a monoacyl-sn-glycero-3-phosphate + ADP + H(+). It carries out the reaction a 1,2-diacyl-sn-glycerol + ATP = a 1,2-diacyl-sn-glycero-3-phosphate + ADP + H(+). The catalysed reaction is an N-acylsphing-4-enine + ATP = an N-acylsphing-4-enine 1-phosphate + ADP + H(+). The enzyme catalyses 1,2-di-(9Z-octadecenoyl)-sn-glycerol + ATP = 1,2-di-(9Z-octadecenoyl)-sn-glycero-3-phosphate + ADP + H(+). It catalyses the reaction 1-(9Z-octadecenoyl)-sn-glycerol + ATP = 1-(9Z-octadecenoyl)-sn-glycero-3-phosphate + ADP + H(+). It carries out the reaction 1-(5Z,8Z,11Z,14Z-eicosatetraenoyl)-sn-glycerol + ATP = 1-(5Z,8Z,11Z,14Z-eicosatetraenoyl)-sn-glycero-3-phosphate + ADP + H(+). The catalysed reaction is a 1-acyl-sn-glycerol + ATP = a 1-acyl-sn-glycero-3-phosphate + ADP + H(+). The enzyme catalyses 1-hexadecanoyl-sn-glycerol + ATP = 1-hexadecanoyl-sn-glycero-3-phosphate + ADP + H(+). It catalyses the reaction a 2-acylglycerol + ATP = a 2-acyl-sn-glycerol 3-phosphate + ADP + H(+). It carries out the reaction 2-(5Z,8Z,11Z,14Z-eicosatetraenoyl)-glycerol + ATP = 2-(5Z,8Z,11Z,14Z-eicosatetraenoyl)-sn-glycero-3-phosphate + ADP + H(+). The catalysed reaction is N-(hexanoyl)sphing-4-enine + ATP = N-hexanoylsphing-4-enine 1-phosphate + ADP + H(+). It participates in lipid metabolism; glycerolipid metabolism. With respect to regulation, both the ceramide and diacylglycerol kinase activities are inhibited by sphingosine and stimulated by cardiolipin. Both activities are stimulated by calcium when magnesium concentrations are low but inhibited by calcium when magnesium concentrations are high. Functionally, lipid kinase that can phosphorylate both monoacylglycerol and diacylglycerol to form lysophosphatidic acid (LPA) and phosphatidic acid (PA), respectively. Phosphorylates ceramide but not sphingosine. Phosphorylates 1,2-dioleoylglycerol more rapidly than 2,3-dioleoylglycerol. Independently of its lipid kinase activity, acts as a component of the TIM22 complex. The TIM22 complex mediates the import and insertion of multi-pass transmembrane proteins into the mitochondrial inner membrane by forming a twin-pore translocase that uses the membrane potential as the external driving force. In the TIM22 complex, required for the import of a subset of metabolite carriers into mitochondria, such as ANT1/SLC25A4 and SLC25A24, while it is not required for the import of TIMM23. Overexpression increases the formation and secretion of LPA, resulting in transactivation of EGFR and activation of the downstream MAPK signaling pathway, leading to increased cell growth. The chain is Acylglycerol kinase, mitochondrial from Mus musculus (Mouse).